Reading from the N-terminus, the 350-residue chain is Holliday junction branch migration complex subunit RuvB (350 aa).

The large ATPase domain (RuvB-L) stretch occupies residues 1 to 184 (MSKTPERLVT…FGIPIRLEFY (184 aa)). Residues L23, R24, G65, K68, T69, T70, 131–133 (EDF), R174, Y184, and R221 contribute to the ATP site. Residue T69 participates in Mg(2+) binding. The interval 185–255 (TIEELERIVL…LADKALSLLD (71 aa)) is small ATPAse domain (RuvB-S). The tract at residues 258–350 (PIGLDQMDRR…GLFPDQSEED (93 aa)) is head domain (RuvB-H). DNA-binding residues include R294, R313, and R318.

It belongs to the RuvB family. As to quaternary structure, homohexamer. Forms an RuvA(8)-RuvB(12)-Holliday junction (HJ) complex. HJ DNA is sandwiched between 2 RuvA tetramers; dsDNA enters through RuvA and exits via RuvB. An RuvB hexamer assembles on each DNA strand where it exits the tetramer. Each RuvB hexamer is contacted by two RuvA subunits (via domain III) on 2 adjacent RuvB subunits; this complex drives branch migration. In the full resolvosome a probable DNA-RuvA(4)-RuvB(12)-RuvC(2) complex forms which resolves the HJ.

The protein resides in the cytoplasm. It catalyses the reaction ATP + H2O = ADP + phosphate + H(+). In terms of biological role, the RuvA-RuvB-RuvC complex processes Holliday junction (HJ) DNA during genetic recombination and DNA repair, while the RuvA-RuvB complex plays an important role in the rescue of blocked DNA replication forks via replication fork reversal (RFR). RuvA specifically binds to HJ cruciform DNA, conferring on it an open structure. The RuvB hexamer acts as an ATP-dependent pump, pulling dsDNA into and through the RuvAB complex. RuvB forms 2 homohexamers on either side of HJ DNA bound by 1 or 2 RuvA tetramers; 4 subunits per hexamer contact DNA at a time. Coordinated motions by a converter formed by DNA-disengaged RuvB subunits stimulates ATP hydrolysis and nucleotide exchange. Immobilization of the converter enables RuvB to convert the ATP-contained energy into a lever motion, pulling 2 nucleotides of DNA out of the RuvA tetramer per ATP hydrolyzed, thus driving DNA branch migration. The RuvB motors rotate together with the DNA substrate, which together with the progressing nucleotide cycle form the mechanistic basis for DNA recombination by continuous HJ branch migration. Branch migration allows RuvC to scan DNA until it finds its consensus sequence, where it cleaves and resolves cruciform DNA. In Beijerinckia indica subsp. indica (strain ATCC 9039 / DSM 1715 / NCIMB 8712), this protein is Holliday junction branch migration complex subunit RuvB.